The sequence spans 329 residues: Glycerol-3-phosphate dehydrogenase [NAD(P)+] (329 aa).

Trp11, Arg30, and Lys103 together coordinate NADPH. Sn-glycerol 3-phosphate-binding residues include Lys103, Gly132, and Ser134. Ala136 serves as a coordination point for NADPH. Sn-glycerol 3-phosphate contacts are provided by Lys187, Asp240, Ser250, Arg251, and Asn252. Lys187 acts as the Proton acceptor in catalysis. An NADPH-binding site is contributed by Arg251. NADPH-binding residues include Val275 and Glu277.

Belongs to the NAD-dependent glycerol-3-phosphate dehydrogenase family.

It is found in the cytoplasm. The enzyme catalyses sn-glycerol 3-phosphate + NAD(+) = dihydroxyacetone phosphate + NADH + H(+). The catalysed reaction is sn-glycerol 3-phosphate + NADP(+) = dihydroxyacetone phosphate + NADPH + H(+). The protein operates within membrane lipid metabolism; glycerophospholipid metabolism. Its function is as follows. Catalyzes the reduction of the glycolytic intermediate dihydroxyacetone phosphate (DHAP) to sn-glycerol 3-phosphate (G3P), the key precursor for phospholipid synthesis. This chain is Glycerol-3-phosphate dehydrogenase [NAD(P)+], found in Dechloromonas aromatica (strain RCB).